Consider the following 461-residue polypeptide: Putative cytochrome P450 132 (461 aa).

Residue Cys-409 coordinates heme.

The protein belongs to the cytochrome P450 family. The cofactor is heme.

The polypeptide is Putative cytochrome P450 132 (cyp132) (Mycobacterium bovis (strain ATCC BAA-935 / AF2122/97)).